Reading from the N-terminus, the 264-residue chain is Proteasome subunit beta type-4 (264 aa).

Methionine 1 bears the N-acetylmethionine mark. A propeptide spanning residues 1–45 (MEAFWESRAGHWAGGPAPGQFYRIPATPSGLMDPASAPCEGPITR) is cleaved from the precursor. Tyrosine 102 carries the phosphotyrosine modification.

This sequence belongs to the peptidase T1B family. As to quaternary structure, the 26S proteasome consists of a 20S proteasome core and two 19S regulatory subunits. The 20S proteasome core is a barrel-shaped complex made of 28 subunits that are arranged in four stacked rings. The two outer rings are each formed by seven alpha subunits, and the two inner rings are formed by seven beta subunits. The proteolytic activity is exerted by three beta-subunits PSMB5, PSMB6 and PSMB7. Forms a ternary complex with SMAD1 and OAZ1 before PSMB4 is incorporated into the 20S proteasome. Interacts with PRPF19. Detected in liver (at protein level).

The protein localises to the cytoplasm. It localises to the nucleus. Non-catalytic component of the 20S core proteasome complex involved in the proteolytic degradation of most intracellular proteins. This complex plays numerous essential roles within the cell by associating with different regulatory particles. Associated with two 19S regulatory particles, forms the 26S proteasome and thus participates in the ATP-dependent degradation of ubiquitinated proteins. The 26S proteasome plays a key role in the maintenance of protein homeostasis by removing misfolded or damaged proteins that could impair cellular functions, and by removing proteins whose functions are no longer required. Associated with the PA200 or PA28, the 20S proteasome mediates ubiquitin-independent protein degradation. This type of proteolysis is required in several pathways including spermatogenesis (20S-PA200 complex) or generation of a subset of MHC class I-presented antigenic peptides (20S-PA28 complex). SMAD1/OAZ1/PSMB4 complex mediates the degradation of the CREBBP/EP300 repressor SNIP1. This chain is Proteasome subunit beta type-4 (Psmb4), found in Mus musculus (Mouse).